The following is a 279-amino-acid chain: NH(3)-dependent NAD(+) synthetase (279 aa).

46 to 53 (GISGGQDS) is a binding site for ATP. Asp-52 serves as a coordination point for Mg(2+). Residue Arg-145 coordinates deamido-NAD(+). Residue Thr-165 coordinates ATP. Residue Glu-170 participates in Mg(2+) binding. Lys-178 and Asp-185 together coordinate deamido-NAD(+). Residues Lys-194 and Thr-216 each contribute to the ATP site. Position 265 to 266 (265 to 266 (HK)) interacts with deamido-NAD(+).

It belongs to the NAD synthetase family. As to quaternary structure, homodimer.

It catalyses the reaction deamido-NAD(+) + NH4(+) + ATP = AMP + diphosphate + NAD(+) + H(+). Its pathway is cofactor biosynthesis; NAD(+) biosynthesis; NAD(+) from deamido-NAD(+) (ammonia route): step 1/1. Functionally, catalyzes the ATP-dependent amidation of deamido-NAD to form NAD. Uses ammonia as a nitrogen source. The sequence is that of NH(3)-dependent NAD(+) synthetase from Rhodococcus opacus (strain B4).